The sequence spans 577 residues: Arginine--tRNA ligase (577 aa).

The short motif at Pro-122–His-132 is the 'HIGH' region element.

Belongs to the class-I aminoacyl-tRNA synthetase family. As to quaternary structure, monomer.

The protein localises to the cytoplasm. The catalysed reaction is tRNA(Arg) + L-arginine + ATP = L-arginyl-tRNA(Arg) + AMP + diphosphate. This is Arginine--tRNA ligase from Escherichia coli O127:H6 (strain E2348/69 / EPEC).